The sequence spans 93 residues: Cobalt transport protein CbiN (93 aa).

2 helical membrane-spanning segments follow: residues 5-25 and 63-83; these read LMLLVMVVALVILPFFINHGG and LLFTLQGSLGAAVIFYILGYC.

It belongs to the CbiN family. In terms of assembly, forms an energy-coupling factor (ECF) transporter complex composed of an ATP-binding protein (A component, CbiO), a transmembrane protein (T component, CbiQ) and 2 possible substrate-capture proteins (S components, CbiM and CbiN) of unknown stoichimetry.

Its subcellular location is the cell inner membrane. It functions in the pathway cofactor biosynthesis; adenosylcobalamin biosynthesis. Functionally, part of the energy-coupling factor (ECF) transporter complex CbiMNOQ involved in cobalt import. This is Cobalt transport protein CbiN from Salmonella paratyphi B (strain ATCC BAA-1250 / SPB7).